A 119-amino-acid polypeptide reads, in one-letter code: Large ribosomal subunit protein bL20 (119 aa).

This sequence belongs to the bacterial ribosomal protein bL20 family.

Binds directly to 23S ribosomal RNA and is necessary for the in vitro assembly process of the 50S ribosomal subunit. It is not involved in the protein synthesizing functions of that subunit. The chain is Large ribosomal subunit protein bL20 from Shewanella halifaxensis (strain HAW-EB4).